We begin with the raw amino-acid sequence, 479 residues long: MGITSLLLGLTFVLNIALAISIIFLERKDPTSSWAWVMVLLFIPILGFFLYLIFGKPISNRKIFSWDKKSRLGVKTTVQSQLRLLEENQFEFNQPDLIEHKDLVYLHLKNDEAIYTQNNGVDIFTDGQTKFDALLEDIEKAKKHIHIQYYIMRSDGLGNRLADMLIKKVNEGVEVRVLYDDMGSRSLKNSYIKRLKRAGVMVEAFFPSRFIVNFKINYRNHRKLAIIDGYIGYLGGFNVGDEYLGINKKFGYWRDTHLRVIGDAVQSMQTRFILDWNQASRDTILYNEDYYQTVSAGNVGMQIVTSGPDSEYEQIKNGYIKMIMEANDYICIQTPYFIPDESLRDALKIAVLSGVHVKIMIPNKPDHPFVYWATLSYCGDLIQAGAEIFIYQNGFLHAKTIIVDGRIASVGTANIDVRSFRLNFEVNGFLYDSEVVNRLQNEFDADLEKSTQMTRKLYDQRSIGIRFKESISRLISPVL.

2 helical membrane-spanning segments follow: residues 5–25 (SLLL…IIFL) and 34–54 (WAWV…YLIF). PLD phosphodiesterase domains are found at residues 216-243 (INYR…GDEY) and 392-419 (QNGF…DVRS). Active-site residues include His-221, Lys-223, Asp-228, His-397, Lys-399, and Asp-404.

This sequence belongs to the phospholipase D family. Cardiolipin synthase subfamily.

It is found in the cell membrane. The catalysed reaction is 2 a 1,2-diacyl-sn-glycero-3-phospho-(1'-sn-glycerol) = a cardiolipin + glycerol. Functionally, catalyzes the reversible phosphatidyl group transfer from one phosphatidylglycerol molecule to another to form cardiolipin (CL) (diphosphatidylglycerol) and glycerol. The chain is Cardiolipin synthase (cls) from Oceanobacillus iheyensis (strain DSM 14371 / CIP 107618 / JCM 11309 / KCTC 3954 / HTE831).